Reading from the N-terminus, the 274-residue chain is MKKTQTWIITCIYLQLLLFNPLVKTKGICGKRVTDDVKDVTKLVANLPKDYKIALKYVPGMDVLPSHCWISVMVEQLSVSLTDLLDKFSNISEGLSNYSIIDKLVKIVDDLVECTEGYSFENVKKAPKSPELRLFTPEEFFRIFNRSIDAFKDLETVASKSSECVVSSTLSPDKDSRVSVTKPFMLPPVAASSLRNDSSSSNRKASNSIGDSNLQWAAMALPAFFSLVIGFAFGALYWKKKQPNLTRTVENIQINEEDNEISMLQEKEREFQEV.

The signal sequence occupies residues 1 to 25; it reads MKKTQTWIITCIYLQLLLFNPLVKT. Residues 26 to 215 lie on the Extracellular side of the membrane; the sequence is KGICGKRVTD…SNSIGDSNLQ (190 aa). 2 disulfide bridges follow: Cys29–Cys114 and Cys68–Cys164. N-linked (GlcNAc...) asparagine glycans are attached at residues Asn90, Asn97, Asn145, and Asn196. Residues 216–238 form a helical membrane-spanning segment; that stretch reads WAAMALPAFFSLVIGFAFGALYW. Over 239–274 the chain is Cytoplasmic; sequence KKKQPNLTRTVENIQINEEDNEISMLQEKEREFQEV.

The protein belongs to the SCF family. In terms of assembly, homodimer, non-covalently linked. A soluble form is produced by proteolytic processing of the extracellular domain.

Its subcellular location is the cytoplasm. The protein localises to the cytoskeleton. It localises to the cell membrane. The protein resides in the cell projection. It is found in the lamellipodium. Its subcellular location is the filopodium. The protein localises to the secreted. Stimulates the proliferation of mast cells. Able to augment the proliferation of both myeloid and lymphoid hematopoietic progenitors in bone marrow culture. Also mediates cell-cell adhesion. Acts synergistically with other cytokines, probably interleukins. In Canis lupus familiaris (Dog), this protein is Kit ligand (KITLG).